Reading from the N-terminus, the 562-residue chain is Arginine--tRNA ligase (562 aa).

A 'HIGH' region motif is present at residues 129-139 (ANPTGPLHVGH).

The protein belongs to the class-I aminoacyl-tRNA synthetase family. As to quaternary structure, monomer.

Its subcellular location is the cytoplasm. It catalyses the reaction tRNA(Arg) + L-arginine + ATP = L-arginyl-tRNA(Arg) + AMP + diphosphate. In Xanthomonas axonopodis pv. citri (strain 306), this protein is Arginine--tRNA ligase.